A 250-amino-acid polypeptide reads, in one-letter code: Pyrroloquinoline-quinone synthase (250 aa).

This sequence belongs to the PqqC family.

It catalyses the reaction 6-(2-amino-2-carboxyethyl)-7,8-dioxo-1,2,3,4,7,8-hexahydroquinoline-2,4-dicarboxylate + 3 O2 = pyrroloquinoline quinone + 2 H2O2 + 2 H2O + H(+). The protein operates within cofactor biosynthesis; pyrroloquinoline quinone biosynthesis. Its function is as follows. Ring cyclization and eight-electron oxidation of 3a-(2-amino-2-carboxyethyl)-4,5-dioxo-4,5,6,7,8,9-hexahydroquinoline-7,9-dicarboxylic-acid to PQQ. This chain is Pyrroloquinoline-quinone synthase, found in Xanthomonas oryzae pv. oryzae (strain KACC10331 / KXO85).